We begin with the raw amino-acid sequence, 688 residues long: ERI1 exoribonuclease 2 (688 aa).

Residues 37–226 enclose the Exonuclease domain; the sequence is LIVVDFESTC…DDSRNTALLA (190 aa). Mg(2+)-binding residues include Asp41, Glu43, and Asp156. Glu43 functions as the Proton acceptor in the catalytic mechanism. Glu43 provides a ligand contact to AMP. The Proton acceptor role is filled by His213. Residue His213 participates in AMP binding. Residue Asp218 coordinates Mg(2+). The segment covering 337–360 has biased composition (polar residues); that stretch reads VDQLHSPTLNPPLTMQKPSKSDQL. Disordered regions lie at residues 337–367 and 523–546; these read VDQL…DSSK and DPLL…TKRQ. Zn(2+) is bound by residues Cys594, Cys596, Cys619, and Cys631. A GRF-type zinc finger spans residues 594–640; that stretch reads CKCGRRSKRLIVSNNGPNHGKAFYCCPVGKYQQDRKCCGYFKWEQTL.

It belongs to the ERI2 family. Requires Mg(2+) as cofactor.

The sequence is that of ERI1 exoribonuclease 2 (Eri2) from Mus musculus (Mouse).